The sequence spans 142 residues: Mitochondrial import receptor subunit TOM22 homolog (142 aa).

The span at 1–11 (MAAAVAAAGAG) shows a compositional bias: low complexity. The interval 1-40 (MAAAVAAAGAGEPLSPEELVPKAEAEKAEEDLEEDDDDEL) is disordered. Residue A2 is modified to N-acetylalanine. Topologically, residues 2-82 (AAAVAAAGAG…VAQKMYRFSR (81 aa)) are cytoplasmic. S15 carries the phosphoserine modification. The span at 27–40 (KAEEDLEEDDDDEL) shows a compositional bias: acidic residues. Residues 41–50 (DETLSERLWG) are import sequence; necessary for mitochondrion outer membrane localization and integration in the TOM complex. T43 carries the phosphothreonine modification. S45 is modified (phosphoserine). Residues 83–103 (AALWIGTTSFMILVLPVVFET) form a helical membrane-spanning segment. The interval 83–103 (AALWIGTTSFMILVLPVVFET) is TMD; necessary for mitochondrion outer membrane localization and integration in the TOM complex. Residues 104 to 142 (EKLQMEQQQQLQQRQILLGPNTGLSGGMPGALPPLPGKI) lie on the Mitochondrial intermembrane side of the membrane. A C-tail signal; necessary for mitochondrion outer membrane localization and integration in the TOM complex region spans residues 123-142 (PNTGLSGGMPGALPPLPGKI).

It belongs to the Tom22 family. As to quaternary structure, forms part of the preprotein translocase complex of the outer mitochondrial membrane (TOM complex) which consists of at least 7 different proteins (TOMM5, TOMM6, TOMM7, TOMM20, TOMM22, TOMM40 and TOMM70). Interacts with TOMM40. Interacts with PPP2R2B.

The protein resides in the mitochondrion outer membrane. Its function is as follows. Central receptor component of the translocase of the outer membrane of mitochondria (TOM complex) responsible for the recognition and translocation of cytosolically synthesized mitochondrial preproteins. Together with the peripheral receptor TOM20 functions as the transit peptide receptor and facilitates the movement of preproteins into the translocation pore. Required for the translocation across the mitochondrial outer membrane of cytochrome P450 monooxygenases. This chain is Mitochondrial import receptor subunit TOM22 homolog (Tomm22), found in Rattus norvegicus (Rat).